Here is a 607-residue protein sequence, read N- to C-terminus: Large ribosomal subunit assembly factor BipA (607 aa).

One can recognise a tr-type G domain in the interval 3-198; the sequence is ENLRNIAIIA…AIVDHVPAPD (196 aa). Residues 15-20 and 128-131 each bind GTP; these read DHGKTT and NKVD. A C-terminal domain (CTD), required but not sufficient to bind 70S or 30S ribosomes region spans residues 481–607; the sequence is GQRQNGVLIS…RRANRGQKEE (127 aa).

It belongs to the TRAFAC class translation factor GTPase superfamily. Classic translation factor GTPase family. BipA subfamily. In terms of assembly, monomer.

The protein resides in the cytoplasm. The catalysed reaction is GTP + H2O = GDP + phosphate + H(+). Ribosome-associated GTPase is not affected by low levels of ppGpp, &gt;40 uM ppGpp and &gt;50 uM GDP inhibit GTPase. The C-terminus (residues 387-607 or 481-607) inhibits GTPase activity, in its absence kcat increases, but GTPase is no longer stimulated by 70S ribosome or 30S or 50S subunits. Functionally, a 50S ribosomal subunit assembly protein with GTPase activity, required for 50S subunit assembly at low temperatures, may also play a role in translation. Binds GTP and analogs. Binds the 70S ribosome between the 30S and 50S subunits, in a similar position as ribosome-bound EF-G; it contacts a number of ribosomal proteins, both rRNAs and the A-site tRNA. A ribosome-stimulated GTPase, GTPase activity increases 4 fold in the presence of 70S ribosomes. Binds 70S ribosomes in the presence of GTP or its non-hydrolyzable analog GMPPNP; in the presence of ppGpp or under stress conditions it binds to 30S ribosomal subunits. The sequence is that of Large ribosomal subunit assembly factor BipA from Salmonella typhimurium (strain LT2 / SGSC1412 / ATCC 700720).